Reading from the N-terminus, the 301-residue chain is Probable 5-dehydro-4-deoxyglucarate dehydratase (301 aa).

Belongs to the DapA family.

It carries out the reaction 5-dehydro-4-deoxy-D-glucarate + H(+) = 2,5-dioxopentanoate + CO2 + H2O. It participates in carbohydrate acid metabolism; D-glucarate degradation; 2,5-dioxopentanoate from D-glucarate: step 2/2. The protein is Probable 5-dehydro-4-deoxyglucarate dehydratase of Rhizobium meliloti (strain 1021) (Ensifer meliloti).